A 196-amino-acid polypeptide reads, in one-letter code: Elongation factor Ts (196 aa).

An involved in Mg(2+) ion dislocation from EF-Tu region spans residues 80–83 (TDFV).

The protein belongs to the EF-Ts family.

Its subcellular location is the cytoplasm. Associates with the EF-Tu.GDP complex and induces the exchange of GDP to GTP. It remains bound to the aminoacyl-tRNA.EF-Tu.GTP complex up to the GTP hydrolysis stage on the ribosome. The sequence is that of Elongation factor Ts from Thermosipho melanesiensis (strain DSM 12029 / CIP 104789 / BI429).